Here is a 315-residue protein sequence, read N- to C-terminus: Rhomboid-related protein 4 (315 aa).

Over 1-21 (MQRRTRGINTGLLLLLSQVFQ) the chain is Cytoplasmic. A helical membrane pass occupies residues 22–42 (IGINNIPPVTLATLAVNVWFF). Over 43 to 103 (LNPWKPLYHS…KLERRLGSRW (61 aa)) the chain is Lumenal. The chain crosses the membrane as a helical span at residues 104 to 124 (FAYVIATFSLLTGVVYLLLQF). Over 125 to 137 (TVAELLNQPDFKR) the chain is Cytoplasmic. Residues 138–154 (NCAVGFSGVLFALKVLS) form a helical membrane-spanning segment. Serine 144 (nucleophile) is an active-site residue. The Lumenal segment spans residues 155–180 (NHYCPGGFVNILGFPVPNRFACWAEL). Residues 181–201 (VAIHFCTPGTSFAGHLAGILV) traverse the membrane as a helical segment. Histidine 195 is a catalytic residue. Over 202–315 (GLMYTQGPLK…RQRLHRFDGQ (114 aa)) the chain is Cytoplasmic. The segment at 269–284 (SEEEQLERALRASIWD) is ubiquitin-binding domain (UBD). The segment at 301–315 (PEEMRRQRLHRFDGQ) is VCP/p97-interacting motif (VIM).

Belongs to the peptidase S54 family. Interacts with BIK and STEAP3. Interacts (via C-terminal domain) with VCP/P97. Interacts with ubiquitin and ubiquitinated proteins. Expressed in testis (at protein level). Expressed in intestine, lung, brain, kidney, epididymis, stomach, muscle, spleen, liver, heart and testis.

The protein resides in the endoplasmic reticulum membrane. The protein localises to the mitochondrion membrane. The catalysed reaction is Cleaves type-1 transmembrane domains using a catalytic dyad composed of serine and histidine that are contributed by different transmembrane domains.. Its activity is regulated as follows. Inhibited by aprotinin. Intramembrane-cleaving serine protease that cleaves single transmembrane or multi-pass membrane proteins in the hydrophobic plane of the membrane, luminal loops and juxtamembrane regions. Involved in regulated intramembrane proteolysis and the subsequent release of functional polypeptides from their membrane anchors. Functional component of endoplasmic reticulum-associated degradation (ERAD) for misfolded membrane proteins. Required for the degradation process of some specific misfolded endoplasmic reticulum (ER) luminal proteins. Participates in the transfer of misfolded proteins from the ER to the cytosol, where they are destroyed by the proteasome in a ubiquitin-dependent manner. Functions in BIK, MPZ, PKD1, PTCRA, RHO, STEAP3 and TRAC processing. Involved in the regulation of exosomal secretion; inhibits the TSAP6-mediated secretion pathway. Involved in the regulation of apoptosis; modulates BIK-mediated apoptotic activity. Also plays a role in the regulation of spermatogenesis; inhibits apoptotic activity in spermatogonia. In Mus musculus (Mouse), this protein is Rhomboid-related protein 4 (Rhbdd1).